Here is a 156-residue protein sequence, read N- to C-terminus: Small ribosomal subunit protein uS7 (156 aa).

The protein belongs to the universal ribosomal protein uS7 family. Part of the 30S ribosomal subunit. Contacts proteins S9 and S11.

Its function is as follows. One of the primary rRNA binding proteins, it binds directly to 16S rRNA where it nucleates assembly of the head domain of the 30S subunit. Is located at the subunit interface close to the decoding center, probably blocks exit of the E-site tRNA. In Beutenbergia cavernae (strain ATCC BAA-8 / DSM 12333 / CCUG 43141 / JCM 11478 / NBRC 16432 / NCIMB 13614 / HKI 0122), this protein is Small ribosomal subunit protein uS7.